Consider the following 234-residue polypeptide: Large ribosomal subunit protein uL1 (234 aa).

Belongs to the universal ribosomal protein uL1 family. In terms of assembly, part of the 50S ribosomal subunit.

Binds directly to 23S rRNA. The L1 stalk is quite mobile in the ribosome, and is involved in E site tRNA release. In terms of biological role, protein L1 is also a translational repressor protein, it controls the translation of the L11 operon by binding to its mRNA. The protein is Large ribosomal subunit protein uL1 of Pectobacterium atrosepticum (strain SCRI 1043 / ATCC BAA-672) (Erwinia carotovora subsp. atroseptica).